Reading from the N-terminus, the 634-residue chain is Probable potassium transport system protein Kup (634 aa).

The next 12 membrane-spanning stretches (helical) occupy residues 19–39 (AIGLMVGAVGVCYGDIGTSPL), 62–82 (VLSLIFWSLVWVVSIKYVIFV), 113–133 (FVVVAGLIGAALFYGDSMITP), 150–170 (GLEHWTVPLALIVLIGLFLIQ), 177–197 (IGILFGPVMVLWFGALAALGV), 225–245 (IGVAILGATVLALTGAEALYA), 259–279 (WFLLVLPALVLNYFGQGATIL), 291–311 (LLAPGWALLPMVALSTLATVI), 349–369 (IYIGGVNWALMVGVVLLVLGF), 379–399 (YGVAVTGTMLITTLLMGVVIW), 406–426 (LWLGVPFFCVMLAVDSLFFAA), and 431–451 (VIQGGAFPVIAGIVIFILMST).

This sequence belongs to the HAK/KUP transporter (TC 2.A.72) family.

The protein localises to the cell inner membrane. The catalysed reaction is K(+)(in) + H(+)(in) = K(+)(out) + H(+)(out). Its function is as follows. Transport of potassium into the cell. Likely operates as a K(+):H(+) symporter. This is Probable potassium transport system protein Kup from Pseudomonas aeruginosa (strain UCBPP-PA14).